Consider the following 95-residue polypeptide: Co-chaperonin GroES (95 aa).

This sequence belongs to the GroES chaperonin family. Heptamer of 7 subunits arranged in a ring. Interacts with the chaperonin GroEL.

The protein resides in the cytoplasm. Together with the chaperonin GroEL, plays an essential role in assisting protein folding. The GroEL-GroES system forms a nano-cage that allows encapsulation of the non-native substrate proteins and provides a physical environment optimized to promote and accelerate protein folding. GroES binds to the apical surface of the GroEL ring, thereby capping the opening of the GroEL channel. The polypeptide is Co-chaperonin GroES (Pelobacter propionicus (strain DSM 2379 / NBRC 103807 / OttBd1)).